A 297-amino-acid polypeptide reads, in one-letter code: NADH-ubiquinone oxidoreductase chain 1 (297 aa).

9 consecutive transmembrane segments (helical) span residues 1-21, 34-54, 66-86, 99-119, 139-159, 170-190, 206-228, 235-257, and 277-297; these read MKSLIVALAIVLAVAFMTLAE, PNHVGFLGLLQPFADGIKLIL, WLFVLAPFLSFYLALLNWLVI, LSILLILAISSLGVYAIIYTG, VSYEIAMSLLVLTVVYMGATL, GTVLLWSLWPMAMIGFVAALA, LVAGFMTEHSAISFTFLFLGEYA, TVLNLMFLGFYNPLVIYLFIWIR, and LPFLIGFLMIQPSTLFVLDLF.

The protein belongs to the complex I subunit 1 family.

It is found in the mitochondrion inner membrane. It catalyses the reaction a ubiquinone + NADH + 5 H(+)(in) = a ubiquinol + NAD(+) + 4 H(+)(out). Core subunit of the mitochondrial membrane respiratory chain NADH dehydrogenase (Complex I) that is believed to belong to the minimal assembly required for catalysis. Complex I functions in the transfer of electrons from NADH to the respiratory chain. The immediate electron acceptor for the enzyme is believed to be ubiquinone. The sequence is that of NADH-ubiquinone oxidoreductase chain 1 from Hyaloraphidium curvatum (Lower fungus).